A 212-amino-acid chain; its full sequence is Uridine kinase (212 aa).

An ATP-binding site is contributed by Gly-13–Thr-20.

It belongs to the uridine kinase family.

The protein resides in the cytoplasm. It carries out the reaction uridine + ATP = UMP + ADP + H(+). The catalysed reaction is cytidine + ATP = CMP + ADP + H(+). The protein operates within pyrimidine metabolism; CTP biosynthesis via salvage pathway; CTP from cytidine: step 1/3. Its pathway is pyrimidine metabolism; UMP biosynthesis via salvage pathway; UMP from uridine: step 1/1. The polypeptide is Uridine kinase (Bacillus mycoides (strain KBAB4) (Bacillus weihenstephanensis)).